The chain runs to 545 residues: Chaperonin GroEL 1 (545 aa).

Residues 30–33, Lys51, 87–91, Gly415, and Asp495 each bind ATP; these read TLGP and DGTTT.

It belongs to the chaperonin (HSP60) family. In terms of assembly, forms a cylinder of 14 subunits composed of two heptameric rings stacked back-to-back. Interacts with the co-chaperonin GroES.

The protein resides in the cytoplasm. It carries out the reaction ATP + H2O + a folded polypeptide = ADP + phosphate + an unfolded polypeptide.. In terms of biological role, together with its co-chaperonin GroES, plays an essential role in assisting protein folding. The GroEL-GroES system forms a nano-cage that allows encapsulation of the non-native substrate proteins and provides a physical environment optimized to promote and accelerate protein folding. The chain is Chaperonin GroEL 1 from Rhizobium etli (strain ATCC 51251 / DSM 11541 / JCM 21823 / NBRC 15573 / CFN 42).